Reading from the N-terminus, the 942-residue chain is Leucine--tRNA ligase 1 (942 aa).

The 'HIGH' region signature appears at 39–49 (PYTNSPLHIGH). Residues 624–628 (KMSKS) carry the 'KMSKS' region motif. Lys627 is a binding site for ATP.

This sequence belongs to the class-I aminoacyl-tRNA synthetase family.

The protein localises to the cytoplasm. The enzyme catalyses tRNA(Leu) + L-leucine + ATP = L-leucyl-tRNA(Leu) + AMP + diphosphate. The sequence is that of Leucine--tRNA ligase 1 from Sulfolobus acidocaldarius (strain ATCC 33909 / DSM 639 / JCM 8929 / NBRC 15157 / NCIMB 11770).